The sequence spans 219 residues: N-(5'-phosphoribosyl)anthranilate isomerase (219 aa).

It belongs to the TrpF family.

It catalyses the reaction N-(5-phospho-beta-D-ribosyl)anthranilate = 1-(2-carboxyphenylamino)-1-deoxy-D-ribulose 5-phosphate. The protein operates within amino-acid biosynthesis; L-tryptophan biosynthesis; L-tryptophan from chorismate: step 3/5. This chain is N-(5'-phosphoribosyl)anthranilate isomerase, found in Mesorhizobium japonicum (strain LMG 29417 / CECT 9101 / MAFF 303099) (Mesorhizobium loti (strain MAFF 303099)).